The primary structure comprises 544 residues: MNYVGLGLIIVLSCLWLGSNASDTDDPLLVQLPQGKLRGRDNGSYYSYESIPYAEPPTGDLRFEAPEPYKQKWSDIFDATKTPVACLQWDQFTPGANKLVGEEDCLTVSVYKPKNSKRNSFPVVAHIHGGAFMFGAAWQNGHENVMREGKFILVKISYRLGPLGFVSTGDRDLPGNYGLKDQRLALKWIKQNIASFGGEPQNVLLVGHSAGGASVHLQMLREDFGQLARAAFSFSGNALDPWVIQKGARGRAFELGRNVGCESAEDSTSLKKCLKSKPASELVTAVRKFLIFSYVPFAPFSPVLEPSDAPDAIITQDPRDVIKSGKFGQVPWAVSYVTEDGGYNAALLLKERKSGIVIDDLNERWLELAPYLLFYRDTKTKKDMDDYSRKIKQEYIGNQRFDIESYSELQRLFTDILFKNSTQESLDLHRKYGKSPAYAYVYDNPAEKGIAQVLANRTDYDFGTVHGDDYFLIFENFVRDVEMRPDEQIISRNFINMLADFASSDNGSLKYGECDFKDNVGSEKFQLLAIYIDGCQNRQHVEFP.

Residues 1-21 (MNYVGLGLIIVLSCLWLGSNA) form the signal peptide. An N-linked (GlcNAc...) asparagine glycan is attached at Asn-42. A disulfide bond links Cys-86 and Cys-105. Residue Ser-209 is the Acyl-ester intermediate of the active site. Cys-261 and Cys-273 form a disulfide bridge. Asn-420 and Asn-456 each carry an N-linked (GlcNAc...) asparagine glycan. Catalysis depends on His-466, which acts as the Charge relay system. Asn-506 carries N-linked (GlcNAc...) asparagine glycosylation. Residues Cys-514 and Cys-535 are joined by a disulfide bond.

This sequence belongs to the type-B carboxylesterase/lipase family. In terms of assembly, monomer. In terms of tissue distribution, specifically expressed in the ejaculatory bulbs of male.

It is found in the secreted. The enzyme catalyses a carboxylic ester + H2O = an alcohol + a carboxylate + H(+). Transferred from the ejaculatory bulbs of males to the female genitals upon copulation, plays an important role in the reproductive biology. This chain is Esterase-6 (Est-6), found in Drosophila melanogaster (Fruit fly).